The primary structure comprises 529 residues: CTP synthase (529 aa).

The amidoligase domain stretch occupies residues 1–267 (MKEAKFIFVT…DTQILEHFHL (267 aa)). CTP is bound at residue S15. Position 15 (S15) interacts with UTP. ATP is bound by residues 16–21 (SLGKGL) and D73. The Mg(2+) site is built by D73 and E141. Residues 148–150 (DIE), 188–193 (KTKPTQ), and K224 contribute to the CTP site. Residues 188 to 193 (KTKPTQ) and K224 contribute to the UTP site. The 238-residue stretch at 292–529 (TVSIVGKYTE…SFVKAAIDKK (238 aa)) folds into the Glutamine amidotransferase type-1 domain. G354 serves as a coordination point for L-glutamine. C381 acts as the Nucleophile; for glutamine hydrolysis in catalysis. L-glutamine-binding positions include 382–385 (LGMQ), E405, and R459. Active-site residues include H504 and E506.

This sequence belongs to the CTP synthase family. Homotetramer.

It carries out the reaction UTP + L-glutamine + ATP + H2O = CTP + L-glutamate + ADP + phosphate + 2 H(+). It catalyses the reaction L-glutamine + H2O = L-glutamate + NH4(+). The enzyme catalyses UTP + NH4(+) + ATP = CTP + ADP + phosphate + 2 H(+). Its pathway is pyrimidine metabolism; CTP biosynthesis via de novo pathway; CTP from UDP: step 2/2. Its activity is regulated as follows. Allosterically activated by GTP, when glutamine is the substrate; GTP has no effect on the reaction when ammonia is the substrate. The allosteric effector GTP functions by stabilizing the protein conformation that binds the tetrahedral intermediate(s) formed during glutamine hydrolysis. Inhibited by the product CTP, via allosteric rather than competitive inhibition. Catalyzes the ATP-dependent amination of UTP to CTP with either L-glutamine or ammonia as the source of nitrogen. Regulates intracellular CTP levels through interactions with the four ribonucleotide triphosphates. The polypeptide is CTP synthase (Wolbachia pipientis wMel).